The primary structure comprises 763 residues: MKYNQFSFIPRPIAIAEQELQALGFDITHQQADKKALENFCRKIFFNYKDTDYPLHQLIADFETDLLTFFNSERPLTADIFYTISLQLLGFIPHVDFTNTTDFLEKIAFPINYQKGHILEALYHLLVSRQKSGMTLLDDLISKGLIPVDNNYHFFNGKSLATFDTTDLIREVVYVQSPLDTDQDGQLDLIKVNIIRPKTSHQLPTMMTASPYHQGTNVVANDKKLYKMEGDLAVKPARTINVETRDFEPLAAPDVDLPIGESEERFNFIDPYTLNDYFLARGFANIYVSGVGTAGSDGFMTSGDYAQVESFKAVIDWLNGKSIAFSSHRRDQKVVADWASGLVCTTGKSYLGTMSTALATTGVEGLKVIIAESAISSWYDYYRENGLVCSPGGYPGEDLDVLTELTYSRNLLPGDYLRNNAHYQEFLDEQSAQLDRASGDYNQFWHDRNYLPHADKVKATCVFTHGLQDWNVKPRHIFNIFNALPDTVEKHAFLHHGEHVYMHNWQSIDFRESMNTLLSEKMLGQDNHFVLPTLIWQDNSQEQAWTSLAEFGSSNQATLALGTDQKIIDNHYAKAEFERYSKNFRTFKSELFTGKANAICLDLPIKNDYHINGQITLHLTVKSSENKGILSAQVLDYGEKKRFKDVPSVLDLYAIDNGCNFSREALKELPFTKAKERVITKGVLNLQNRTDLLTIEDIPANEWMTFDFTLQPSIYKLEKGDTLRVLLYTTDFEHTIRDNSNYILTVDLDKSNLEIPIENNVGL.

Catalysis depends on charge relay system residues S349, D469, and H499.

This sequence belongs to the peptidase S15 family. As to quaternary structure, homodimer.

The protein resides in the cytoplasm. The enzyme catalyses Hydrolyzes Xaa-Pro-|- bonds to release unblocked, N-terminal dipeptides from substrates including Ala-Pro-|-p-nitroanilide and (sequentially) Tyr-Pro-|-Phe-Pro-|-Gly-Pro-|-Ile.. Removes N-terminal dipeptides sequentially from polypeptides having unsubstituted N-termini provided that the penultimate residue is proline. This chain is Xaa-Pro dipeptidyl-peptidase, found in Streptococcus macedonicus (Streptococcus gallolyticus macedonicus).